Here is a 179-residue protein sequence, read N- to C-terminus: Oryzines biosynthesis cluster protein J (179 aa).

In terms of domain architecture, Cupin type-2 spans 88–148; that stretch reads YVDYHPGCEP…NHCWRNPSKT (61 aa).

This sequence belongs to the oryJ family.

It participates in secondary metabolite biosynthesis. Its function is as follows. Part of the gene cluster that mediates the biosynthesis of oryzines, natural products with an unusual maleidride backbone. The two subunits of the fungal fatty acid synthase oryfasA and oryfasB probably form octenoic acid. This fatty acid is most likely activated by the acyl-CoA ligase oryP to give octenyl-CoA before the citrate synthase-like protein oryE catalyzes condensation with oxaloacetate to form tricarboxylic acid. The next steps of the pathways are conjectural, but a favorite possible route has been proposed, beginning with decarboxylation and concomitant dehydration by the decarboxylase oryM, followed by tautomerization, which may lead to the production of a diene intermediate. Reduction of this diene intermediate could give the known metabolite piliformic acid. On the pathway to oryzine B and oryzine A, however, hydroxylation of the diene by the alpha-ketoglutarate-dependent dioxygenase oryG and lactonisation by the lactonohydrolases oryH or oryL could give oryzine B directly. Finally, enoyl reduction by the dehydrogenase oryD would then convert oryzine B into oryzine A. This chain is Oryzines biosynthesis cluster protein J, found in Aspergillus oryzae (strain ATCC 42149 / RIB 40) (Yellow koji mold).